Consider the following 233-residue polypeptide: Small ribosomal subunit protein uS3 (233 aa).

Positions 39–107 (VRQFLMKKLV…PAQINISEVR (69 aa)) constitute a KH type-2 domain.

The protein belongs to the universal ribosomal protein uS3 family. As to quaternary structure, part of the 30S ribosomal subunit. Forms a tight complex with proteins S10 and S14.

Binds the lower part of the 30S subunit head. Binds mRNA in the 70S ribosome, positioning it for translation. This chain is Small ribosomal subunit protein uS3, found in Buchnera aphidicola subsp. Schizaphis graminum (strain Sg).